We begin with the raw amino-acid sequence, 539 residues long: Eukaryotic translation initiation factor 3 subunit L (539 aa).

Residues Thr-306–His-514 form the PCI domain.

This sequence belongs to the eIF-3 subunit L family. As to quaternary structure, component of the eukaryotic translation initiation factor 3 (eIF-3) complex. The eIF-3 complex interacts with pix.

It localises to the cytoplasm. In terms of biological role, component of the eukaryotic translation initiation factor 3 (eIF-3) complex, which is involved in protein synthesis of a specialized repertoire of mRNAs and, together with other initiation factors, stimulates binding of mRNA and methionyl-tRNAi to the 40S ribosome. The eIF-3 complex specifically targets and initiates translation of a subset of mRNAs involved in cell proliferation. The protein is Eukaryotic translation initiation factor 3 subunit L of Drosophila sechellia (Fruit fly).